Here is a 1501-residue protein sequence, read N- to C-terminus: Inactive protein tyrosine kinase pTKL (1501 aa).

Residues asparagine 64, asparagine 128, and asparagine 133 are each glycosylated (N-linked (GlcNAc...) asparagine). The span at 204-221 shows a compositional bias: basic residues; sequence KKNKKNKKNKKKKNKKTK. The disordered stretch occupies residues 204–223; the sequence is KKNKKNKKNKKKKNKKTKNT. N-linked (GlcNAc...) asparagine glycans are attached at residues asparagine 239, asparagine 242, asparagine 258, and asparagine 327. Residues 257-273 show a composition bias toward basic and acidic residues; sequence MNISLHEKNDKKNEKKN. Residues 257–276 are disordered; that stretch reads MNISLHEKNDKKNEKKNEKK. The SAM domain occupies 301-366; the sequence is WSLREVIQWL…LQLIKNLQVM (66 aa). A disordered region spans residues 392–425; that stretch reads NKNIKKGKNIKKEKKKKKEKNIKKEKKKKKKETK. The span at 394–424 shows a compositional bias: basic residues; it reads NIKKGKNIKKEKKKKKEKNIKKEKKKKKKET. Residues 399–433 adopt a coiled-coil conformation; sequence KNIKKEKKKKKEKNIKKEKKKKKKETKKFNNMDKK. Asparagine 448, asparagine 463, and asparagine 471 each carry an N-linked (GlcNAc...) asparagine glycan. The RVxF motif 1 signature appears at 483-486; sequence KVSF. N-linked (GlcNAc...) asparagine glycosylation occurs at asparagine 506. Residues 543–597 are compositionally biased toward low complexity; the sequence is QLSSPLSSPLSSPSPSSSPSSSPSSSPSSSPSSSPSPSSSPSPSSSPSSSPSSSP. The interval 543–607 is disordered; the sequence is QLSSPLSSPL…SSPPSPLSYK (65 aa). Asparagine 652 carries N-linked (GlcNAc...) asparagine glycosylation. The tract at residues 659–678 is disordered; it reads IKKSKSKYNNDKKEQKKLPL. Residues 666 to 675 show a composition bias toward basic and acidic residues; sequence YNNDKKEQKK. Residues asparagine 681, asparagine 712, asparagine 737, asparagine 811, and asparagine 819 are each glycosylated (N-linked (GlcNAc...) asparagine). Residues 836 to 844 and lysine 864 each bind ATP; that span reads QNINNFGKY. N-linked (GlcNAc...) asparagine glycosylation is found at asparagine 1024, asparagine 1031, asparagine 1074, and asparagine 1157. Residues 1088-1483 form the Protein kinase domain; it reads FHYQHNVLCG…HILKTISTLY (396 aa). An RVxF motif 2 motif is present at residues 1238–1241; it reads KVLF. Asparagine 1382 carries an N-linked (GlcNAc...) asparagine glycan.

This sequence belongs to the protein kinase superfamily. TKL Ser/Thr protein kinase family. In terms of assembly, interacts (via RVxF motif 1 and/or 2) with phosphatase PP1C. May interact (via SAM domain) with SERA5 (via C-terminus).

It localises to the parasitophorous vacuole. Its subcellular location is the host cell membrane. It is found in the host cytoplasm. The protein resides in the host cytoskeleton. This Plasmodium falciparum (isolate 3D7) protein is Inactive protein tyrosine kinase pTKL.